We begin with the raw amino-acid sequence, 90 residues long: Probable dynein light chain 2, cytoplasmic (90 aa).

The protein belongs to the dynein light chain family.

It is found in the cytoplasm. The protein resides in the cytoskeleton. Acts as one of several non-catalytic accessory components of a dynein complex. The sequence is that of Probable dynein light chain 2, cytoplasmic (dlc-2) from Caenorhabditis elegans.